A 688-amino-acid polypeptide reads, in one-letter code: Translation initiation factor IF-2 (688 aa).

2 stretches are compositionally biased toward basic and acidic residues: residues 53 to 62 (GKEKSEKTKE) and 86 to 95 (KRDDKNEKVN). Residues 53–100 (GKEKSEKTKEEDDEIETTAKNPIKESMNNKKSNKRDDKNEKVNTENAE) are disordered. Residues 187–354 (KRSPIITVMG…MILLSSEILE (168 aa)) enclose the tr-type G domain. Residues 196–203 (GHVDHGKT) are G1. 196–203 (GHVDHGKT) contributes to the GTP binding site. Residues 221–225 (GITQH) form a G2 region. Positions 242-245 (DTPG) are G3. GTP-binding positions include 242 to 246 (DTPGH) and 296 to 299 (NKID). A G4 region spans residues 296 to 299 (NKID). The segment at 332–334 (SAH) is G5.

This sequence belongs to the TRAFAC class translation factor GTPase superfamily. Classic translation factor GTPase family. IF-2 subfamily.

Its subcellular location is the cytoplasm. In terms of biological role, one of the essential components for the initiation of protein synthesis. Protects formylmethionyl-tRNA from spontaneous hydrolysis and promotes its binding to the 30S ribosomal subunits. Also involved in the hydrolysis of GTP during the formation of the 70S ribosomal complex. The protein is Translation initiation factor IF-2 of Clostridium botulinum (strain Kyoto / Type A2).